A 606-amino-acid polypeptide reads, in one-letter code: Adenine deaminase (606 aa).

This sequence belongs to the metallo-dependent hydrolases superfamily. Adenine deaminase family. Mn(2+) is required as a cofactor.

It carries out the reaction adenine + H2O + H(+) = hypoxanthine + NH4(+). This Rubrobacter xylanophilus (strain DSM 9941 / JCM 11954 / NBRC 16129 / PRD-1) protein is Adenine deaminase.